Reading from the N-terminus, the 98-residue chain is Integration host factor subunit alpha (98 aa).

This sequence belongs to the bacterial histone-like protein family. As to quaternary structure, heterodimer of an alpha and a beta chain.

Its function is as follows. This protein is one of the two subunits of integration host factor, a specific DNA-binding protein that functions in genetic recombination as well as in transcriptional and translational control. The sequence is that of Integration host factor subunit alpha from Acinetobacter baumannii (strain AB307-0294).